We begin with the raw amino-acid sequence, 297 residues long: L-threonate dehydrogenase (297 aa).

NAD(+) is bound by residues Arg-3–Cys-31 and Thr-97. Lys-173 is a catalytic residue. NAD(+) is bound at residue Lys-241.

It belongs to the HIBADH-related family. L-threonate dehydrogenase subfamily.

The catalysed reaction is L-threonate + NAD(+) = 2-dehydro-L-erythronate + NADH + H(+). Its function is as follows. Catalyzes oxidation of L-threonate to 2-oxo-tetronate. Can use either NAD(+) or NADP(+) as cosubstrate, with a preference for NAD(+). This is L-threonate dehydrogenase from Cupriavidus necator (strain ATCC 17699 / DSM 428 / KCTC 22496 / NCIMB 10442 / H16 / Stanier 337) (Ralstonia eutropha).